We begin with the raw amino-acid sequence, 148 residues long: Large ribosomal subunit protein uL15 (148 aa).

A disordered region spans residues 1–51 (MNLSNLKPAEGSTKTRKRIGRGAGSGLGGTSTRGHKGAKSRSGYSKKVGFE). Positions 21-31 (RGAGSGLGGTS) are enriched in gly residues.

Belongs to the universal ribosomal protein uL15 family. Part of the 50S ribosomal subunit.

Binds to the 23S rRNA. The chain is Large ribosomal subunit protein uL15 from Bacteroides thetaiotaomicron (strain ATCC 29148 / DSM 2079 / JCM 5827 / CCUG 10774 / NCTC 10582 / VPI-5482 / E50).